The chain runs to 91 residues: MIPRNFFFTILICAFNVCATFTAVATASPDCIGPFASYALFAFVTCICVCSIVCLVINFFQLVDWIFVRIAYLRHHPEYRNQNVAALLRLI.

A signal peptide spans 1–22 (MIPRNFFFTILICAFNVCATFT). The Lumenal portion of the chain corresponds to 23–34 (AVATASPDCIGP). Residues 35–60 (FASYALFAFVTCICVCSIVCLVINFF) form a helical membrane-spanning segment. The Cytoplasmic portion of the chain corresponds to 61–91 (QLVDWIFVRIAYLRHHPEYRNQNVAALLRLI).

This sequence belongs to the adenoviridae E3B family.

The protein resides in the host endoplasmic reticulum membrane. Down-regulates the EGF receptor. This chain is Early E3B 10.4 kDa protein, found in Homo sapiens (Human).